Reading from the N-terminus, the 380-residue chain is mRNA cap guanine-N(7) methyltransferase (380 aa).

In terms of domain architecture, mRNA cap 0 methyltransferase spans 24–333 (SRIFFMRNMN…MYLVFGFRKK (310 aa)). 33–34 (NN) serves as a coordination point for mRNA. The S-adenosyl-L-methionine site is built by Lys37, Ala62, Asp84, Asp117, Gln139, and Tyr144. Positions 336 to 380 (EAEKTEEEPATTKPVAESESEQKEVTESEEKEDQEDCEHQEAQTN) are disordered.

The protein belongs to the class I-like SAM-binding methyltransferase superfamily. mRNA cap 0 methyltransferase family.

It localises to the nucleus. It catalyses the reaction a 5'-end (5'-triphosphoguanosine)-ribonucleoside in mRNA + S-adenosyl-L-methionine = a 5'-end (N(7)-methyl 5'-triphosphoguanosine)-ribonucleoside in mRNA + S-adenosyl-L-homocysteine. MRNA-capping methyltransferase that methylates the N7 position of the added guanosine to the 5'-cap structure of mRNAs. Binds RNA containing 5'-terminal GpppC. This Caenorhabditis elegans protein is mRNA cap guanine-N(7) methyltransferase (tag-72).